We begin with the raw amino-acid sequence, 111 residues long: Ferredoxin, 2Fe-2S (111 aa).

[2Fe-2S] cluster contacts are provided by cysteine 10, cysteine 23, cysteine 56, and cysteine 60.

In terms of assembly, homodimer in solution. The cofactor is [2Fe-2S] cluster.

Ferredoxins are iron-sulfur proteins that transfer electrons in a wide variety of metabolic reactions. The polypeptide is Ferredoxin, 2Fe-2S (fdx4) (Aquifex aeolicus (strain VF5)).